The sequence spans 252 residues: Diphthine synthase (252 aa).

Residues L9, D85, V88, S113 to I114, L165, A204, and H229 each bind S-adenosyl-L-methionine.

The protein belongs to the diphthine synthase family. In terms of assembly, homodimer.

The catalysed reaction is 2-[(3S)-amino-3-carboxypropyl]-L-histidyl-[translation elongation factor 2] + 3 S-adenosyl-L-methionine = diphthine-[translation elongation factor 2] + 3 S-adenosyl-L-homocysteine + 3 H(+). Its pathway is protein modification; peptidyl-diphthamide biosynthesis. Functionally, S-adenosyl-L-methionine-dependent methyltransferase that catalyzes the trimethylation of the amino group of the modified target histidine residue in translation elongation factor 2 (EF-2), to form an intermediate called diphthine. The three successive methylation reactions represent the second step of diphthamide biosynthesis. The polypeptide is Diphthine synthase (Methanocorpusculum labreanum (strain ATCC 43576 / DSM 4855 / Z)).